The primary structure comprises 312 residues: Large ribosomal subunit protein uL10 (312 aa).

Positions 287 to 312 are disordered; sequence AAAAPAAKKEEPKEESDDDMGFGLFD.

The protein belongs to the universal ribosomal protein uL10 family. In terms of assembly, P0 forms a pentameric complex by interaction with dimers of P1 and P2. In terms of processing, phosphorylated.

Its function is as follows. Ribosomal protein P0 is the functional equivalent of E.coli protein L10. This chain is Large ribosomal subunit protein uL10, found in Caenorhabditis elegans.